The chain runs to 358 residues: cAMP-dependent protein kinase catalytic subunit PRKX (358 aa).

An N-acetylmethionine modification is found at Met-1. Positions 1–34 (MEAPGLAQAAAAESDSRKVAEETPDGAPALCPSP) are disordered. The Protein kinase domain maps to 49–303 (FDTLATVGTG…ANDVKHHRWF (255 aa)). ATP contacts are provided by residues 55–63 (VGTGTFGRV) and Lys-78. Asp-172 acts as the Proton acceptor in catalysis. A Phosphothreonine modification is found at Thr-203. Positions 304-358 (RSVDWEAVPQRKLKPPIVPKIAGDGDTSNFETYPENDWDTAAPVPQKDLEIFKNF) constitute an AGC-kinase C-terminal domain.

Belongs to the protein kinase superfamily. AGC Ser/Thr protein kinase family. cAMP subfamily. As to quaternary structure, like other cAMP-dependent protein kinases, the inactive holoenzyme is probably composed of 2 PRKX catalytic subunits and a dimer of regulatory subunits. Interacts (cAMP-dependent) specifically with the regulatory subunits PRKAR1A and PRKAR1B. Compared to other cAMP-dependent serine/threonine protein kinases, does not interact with the 2 other PKA regulatory subunits PRKAR2A and PRKAR2B. Interacts with cAMP-dependent protein kinase inhibitor/PKI proteins; inhibits PRKX. Interacts with GPKOW. Interacts with SMAD6. Interacts with PKD1; involved in differentiation and controlled morphogenesis of the kidney. Interacts with PIN1 (via WW domain). Post-translationally, phosphorylated; autophosphorylates in vitro. Widely expressed (at protein level). Specifically expressed in blood by macrophages and granulocytes according to PubMed:9860982.

The protein localises to the cytoplasm. The protein resides in the nucleus. It catalyses the reaction L-seryl-[protein] + ATP = O-phospho-L-seryl-[protein] + ADP + H(+). It carries out the reaction L-threonyl-[protein] + ATP = O-phospho-L-threonyl-[protein] + ADP + H(+). With respect to regulation, binding of cAMP to the PRKAR1A or PRKAR1B regulatory subunits induces dissociation of the holoenzyme heterotetramer. The released monomeric PRKX is then active and able to phosphorylate its substrates. Its function is as follows. Serine/threonine protein kinase regulated by and mediating cAMP signaling in cells. Acts through phosphorylation of downstream targets that may include CREB, SMAD6 and PKD1 and has multiple functions in cellular differentiation and epithelial morphogenesis. Regulates myeloid cell differentiation through SMAD6 phosphorylation. Involved in nephrogenesis by stimulating renal epithelial cell migration and tubulogenesis. Also involved in angiogenesis through stimulation of endothelial cell proliferation, migration and vascular-like structure formation. In Homo sapiens (Human), this protein is cAMP-dependent protein kinase catalytic subunit PRKX (PRKX).